The chain runs to 257 residues: ATP synthase subunit a (257 aa).

The propeptide at methionine 1–threonine 4 is removed in mature form. The next 8 helical transmembrane spans lie at phenylalanine 27–isoleucine 47, isoleucine 58–valine 78, tyrosine 93–isoleucine 113, glutamine 122–leucine 142, valine 149–isoleucine 169, isoleucine 189–leucine 209, phenylalanine 214–isoleucine 234, and phenylalanine 236–leucine 256.

The protein belongs to the ATPase A chain family. F-type ATPases have 2 components, CF(1) - the catalytic core - and CF(0) - the membrane proton channel. CF(1) has five subunits: alpha(3), beta(3), gamma(1), delta(1), epsilon(1). CF(0) has three main subunits: a, b and c.

It localises to the mitochondrion inner membrane. Functionally, mitochondrial membrane ATP synthase (F(1)F(0) ATP synthase or Complex V) produces ATP from ADP in the presence of a proton gradient across the membrane which is generated by electron transport complexes of the respiratory chain. F-type ATPases consist of two structural domains, F(1) - containing the extramembraneous catalytic core and F(0) - containing the membrane proton channel, linked together by a central stalk and a peripheral stalk. During catalysis, ATP synthesis in the catalytic domain of F(1) is coupled via a rotary mechanism of the central stalk subunits to proton translocation. Key component of the proton channel; it may play a direct role in the translocation of protons across the membrane. The polypeptide is ATP synthase subunit a (atp6) (Schizosaccharomyces pombe (strain 972 / ATCC 24843) (Fission yeast)).